We begin with the raw amino-acid sequence, 350 residues long: LHKSIPRVETRYFITIYEEEELKNDVLLRFAKLDFNLLQMLHKQELTEVSMWWKDLDFVTTLPYARDRAVECYFWTVGVYAEPQYSEARVMLAKTIAMISIVDDTFDAYGIVKELEVYTDAIQRWDINQIDRLPDYMKISYKVLLDLYKDYETELSKDGRSEVVHYAKERMKEIVRNYFVEAKWFIEGYMPPVSEYLNNRLATSTYYLLTTTSYLGMKCANKEDFEWLTKNPKILEANVTLCRVIDDIATYEVEKGRGQIATGIECYMRDYGVSTEEAMEKFQEMAEIAWKDVNEGILRPTPVSAKILTRILNLARIIDVTYLHNQDGYTHPEKVLKPHIIALVVDSIEI.

Residues aspartate 103, aspartate 107, aspartate 246, threonine 250, and glutamate 254 each contribute to the Mg(2+) site. The DDXXD motif signature appears at aspartate 103–aspartate 107.

Belongs to the terpene synthase family. Tpsa subfamily. Mg(2+) serves as cofactor.

It localises to the cytoplasm. It carries out the reaction (2E,6E)-farnesyl diphosphate = (-)-vetispiradiene + diphosphate. It functions in the pathway secondary metabolite biosynthesis; terpenoid biosynthesis. Its function is as follows. Sesquiterpene synthase that catalyzes the formation of vetispiradiene from trans,trans-farnesyl diphosphate. The initial internal cyclization produces the monocyclic intermediate germacrene A. The protein is Vetispiradiene synthase 3 of Hyoscyamus muticus (Egyptian henbane).